The primary structure comprises 105 residues: Acylphosphatase (105 aa).

One can recognise an Acylphosphatase-like domain in the interval 16–105 (RLTAWVRGRV…RGGYSGFTQA (90 aa)). Residues R31 and N49 contribute to the active site.

This sequence belongs to the acylphosphatase family.

The catalysed reaction is an acyl phosphate + H2O = a carboxylate + phosphate + H(+). This Acidothermus cellulolyticus (strain ATCC 43068 / DSM 8971 / 11B) protein is Acylphosphatase (acyP).